A 383-amino-acid chain; its full sequence is Creatine kinase, testis isozyme (383 aa).

The Phosphagen kinase N-terminal domain maps to 14 to 100 (KRLSPEEEFP…LDPIIEDRHG (87 aa)). Positions 99–112 (HGGYKPTDKHKTDL) are enriched in basic and acidic residues. The tract at residues 99 to 119 (HGGYKPTDKHKTDLNPDNLKG) is disordered. Residues 127-369 (YVISSRVRTG…KLLVEMEKKL (243 aa)) form the Phosphagen kinase C-terminal domain. ATP is bound by residues 130–134 (SSRVR), histidine 193, arginine 238, arginine 294, 322–327 (RGTGGV), and aspartate 337.

The protein belongs to the ATP:guanido phosphotransferase family. In terms of tissue distribution, exists in many tissues, but preferentially in testis.

The enzyme catalyses creatine + ATP = N-phosphocreatine + ADP + H(+). Reversibly catalyzes the transfer of phosphate between ATP and various phosphogens (e.g. creatine phosphate). Creatine kinase isoenzymes play a central role in energy transduction in tissues with large, fluctuating energy demands, such as skeletal muscle, heart, brain and spermatozoa. The polypeptide is Creatine kinase, testis isozyme (tck1) (Oncorhynchus mykiss (Rainbow trout)).